The sequence spans 86 residues: MSKGHSLQDPYLNTLRKEKVGVSIYLVNGIKLQGTIESFDQFVILLKNTVSQMVYKHAISTVVPVRPIRLPSASESEQGDAEPGNA.

One can recognise a Sm domain in the interval 9-68; it reads DPYLNTLRKEKVGVSIYLVNGIKLQGTIESFDQFVILLKNTVSQMVYKHAISTVVPVRPI.

This sequence belongs to the Hfq family. Homohexamer.

Functionally, RNA chaperone that binds small regulatory RNA (sRNAs) and mRNAs to facilitate mRNA translational regulation in response to envelope stress, environmental stress and changes in metabolite concentrations. Also binds with high specificity to tRNAs. In Pseudomonas fluorescens (strain ATCC BAA-477 / NRRL B-23932 / Pf-5), this protein is RNA-binding protein Hfq.